The primary structure comprises 86 residues: Small ribosomal subunit protein uS15 (86 aa).

This sequence belongs to the universal ribosomal protein uS15 family. As to quaternary structure, part of the 30S ribosomal subunit. Forms a bridge to the 50S subunit in the 70S ribosome, contacting the 23S rRNA.

Functionally, one of the primary rRNA binding proteins, it binds directly to 16S rRNA where it helps nucleate assembly of the platform of the 30S subunit by binding and bridging several RNA helices of the 16S rRNA. Forms an intersubunit bridge (bridge B4) with the 23S rRNA of the 50S subunit in the ribosome. The polypeptide is Small ribosomal subunit protein uS15 (Neorickettsia sennetsu (strain ATCC VR-367 / Miyayama) (Ehrlichia sennetsu)).